The primary structure comprises 334 residues: Thiamine-binding periplasmic protein (334 aa).

An N-terminal signal peptide occupies residues 1–23 (MRLLSLLTFSLFAVIGLAPAAQA). Thiamine contacts are provided by residues 64–65 (DG), 166–167 (AT), Trp-202, and 220–223 (YTTS).

It belongs to the bacterial solute-binding protein 1 family. In terms of assembly, the complex is composed of two ATP-binding proteins (ThiQ), two transmembrane proteins (ThiP) and a solute-binding protein (ThiB).

It is found in the periplasm. Part of the ABC transporter complex ThiBPQ involved in thiamine import. In Brucella abortus biovar 1 (strain 9-941), this protein is Thiamine-binding periplasmic protein (thiB).